Consider the following 270-residue polypeptide: Interleukin-1 beta (270 aa).

A propeptide spanning residues 1-118 (MATVPEPTSE…VYDDDAFVCD (118 aa)) is cleaved from the precursor.

Belongs to the IL-1 family. In terms of assembly, monomer. In its precursor form, weakly interacts with full-length MEFV; the mature cytokine does not interact at all. Interacts with integrins ITGAV:ITGBV and ITGA5:ITGB1; integrin-binding is required for IL1B signaling. Interacts with cargo receptor TMED10; the interaction is direct and is required for the secretion of IL1B mature form. Interacts with HSP90AB1; the interaction facilitates cargo translocation into the ERGIC. Interacts with HSP90B1; the interaction facilitates cargo translocation into the ERGIC.

Its subcellular location is the cytoplasm. It localises to the cytosol. It is found in the secreted. The protein localises to the lysosome. The protein resides in the extracellular exosome. In terms of biological role, potent pro-inflammatory cytokine. Initially discovered as the major endogenous pyrogen, induces prostaglandin synthesis, neutrophil influx and activation, T-cell activation and cytokine production, B-cell activation and antibody production, and fibroblast proliferation and collagen production. Promotes Th17 differentiation of T-cells. Synergizes with IL12/interleukin-12 to induce IFNG synthesis from T-helper 1 (Th1) cells. Plays a role in angiogenesis by inducing VEGF production synergistically with TNF and IL6. Involved in transduction of inflammation downstream of pyroptosis: its mature form is specifically released in the extracellular milieu by passing through the gasdermin-D (GSDMD) pore. This chain is Interleukin-1 beta (IL1B), found in Eumetopias jubatus (Steller sea lion).